Here is a 128-residue protein sequence, read N- to C-terminus: Small ribosomal subunit protein eS8 (128 aa).

The protein belongs to the eukaryotic ribosomal protein eS8 family. In terms of assembly, part of the 30S ribosomal subunit.

In Metallosphaera sedula (strain ATCC 51363 / DSM 5348 / JCM 9185 / NBRC 15509 / TH2), this protein is Small ribosomal subunit protein eS8.